The primary structure comprises 704 residues: Translin-associated factor X-interacting protein 1 (704 aa).

A disordered region spans residues 1–37 (MANLQERKSFSKPRISIQASGGTPEAKGIEKRKLSQK). Coiled coils occupy residues 190–230 (EISV…AEEY) and 304–342 (RRDL…LQLH).

As to quaternary structure, interacts with TSNAX. Specifically expressed in testes. Predominantly detected in the post-meiotic stages of germ cells.

It is found in the cytoplasm. The protein resides in the perinuclear region. Functionally, possible role in spermatogenesis. In Mus musculus (Mouse), this protein is Translin-associated factor X-interacting protein 1.